The following is a 392-amino-acid chain: L-rhamnonate dehydratase (392 aa).

Residues histidine 22 and arginine 48 each contribute to the substrate site. The Mg(2+) site is built by aspartate 214, glutamate 240, and glutamate 268. The active-site Proton acceptor is the histidine 318. Glutamate 338 contributes to the substrate binding site.

It belongs to the mandelate racemase/muconate lactonizing enzyme family. RhamD subfamily. In terms of assembly, homooctamer; tetramer of dimers. The cofactor is Mg(2+).

It carries out the reaction L-rhamnonate = 2-dehydro-3-deoxy-L-rhamnonate + H2O. Functionally, catalyzes the dehydration of L-rhamnonate to 2-keto-3-deoxy-L-rhamnonate (KDR). The polypeptide is L-rhamnonate dehydratase (Paraburkholderia xenovorans (strain LB400)).